The primary structure comprises 308 residues: Probable manganese-dependent inorganic pyrophosphatase (308 aa).

Mn(2+) is bound by residues histidine 9, aspartate 13, aspartate 15, aspartate 75, histidine 97, and aspartate 149.

It belongs to the PPase class C family. It depends on Mn(2+) as a cofactor.

It localises to the cytoplasm. It carries out the reaction diphosphate + H2O = 2 phosphate + H(+). The protein is Probable manganese-dependent inorganic pyrophosphatase of Listeria welshimeri serovar 6b (strain ATCC 35897 / DSM 20650 / CCUG 15529 / CIP 8149 / NCTC 11857 / SLCC 5334 / V8).